The primary structure comprises 598 residues: Nuclear receptor subfamily 4 group A member 2 (598 aa).

Residues 1 to 22 (MPCVQAQYGSSPQGASPASQSY) are disordered. Positions 8–22 (YGSSPQGASPASQSY) are enriched in low complexity. The nuclear receptor DNA-binding region spans 260–335 (EGLCAVCGDN…VGMVKEVVRT (76 aa)). NR C4-type zinc fingers lie at residues 263 to 283 (CAVC…CEGC) and 299 to 323 (CLAN…FQKC). A Bipartite nuclear localization signal (NLS1) motif is present at residues 287–314 (FKRTVQKNAKYVCLANKNCPVDKRRRNR). The segment at 337–361 (SLKGRRGRLPSKPKSPQDPSPPSPP) is disordered. Residues 338–350 (LKGRRGRLPSKPK) carry the Nuclear localization signal (NLS1) motif. The span at 352-361 (PQDPSPPSPP) shows a compositional bias: pro residues. The 236-residue stretch at 360 to 595 (PPVSLISALV…AIIDKLFLDT (236 aa)) folds into the NR LBD domain. Positions 443–452 (FLELFVLRLA) match the nuclear export sequence (NES1) motif. A nuclear export sequence (NES2) motif is present at residues 568-577 (QGLQRIFYLK).

Belongs to the nuclear hormone receptor family. NR4 subfamily. In terms of assembly, interacts with SFPQ, NCOR2, SIN3A and HADC1. The interaction with NCOR2 increases in the absence of PITX3. Interacts with PER2. In terms of tissue distribution, shows a ubiquitous distribution in the cerebral cortex, hippocampus, thalamus, amygdala, and midbrain. Expression increases in prenatally stressed adult offspring in the ventral tegmental area, whereas no changes are observed in the substantia nigra area (at protein level). Not expressed in quiescent liver but is rapidly induced following partial hepatectomy and is specific to hepatic growth as it is not induced in other mitogen-treated cells. Expressed at very low levels in the lung, spleen and stomach and at high levels in the brain.

It localises to the cytoplasm. The protein resides in the nucleus. Its function is as follows. Transcriptional regulator which is important for the differentiation and maintenance of meso-diencephalic dopaminergic (mdDA) neurons during development. It is crucial for expression of a set of genes such as SLC6A3, SLC18A2, TH and DRD2 which are essential for development of mdDA neurons. May confer liver-specific regulation of delayed-early genes induced later in the G1 phase of regeneration along with NR4A1. This chain is Nuclear receptor subfamily 4 group A member 2 (Nr4a2), found in Rattus norvegicus (Rat).